A 729-amino-acid polypeptide reads, in one-letter code: Fatty acid oxidation complex subunit alpha (729 aa).

Residues Met1 to Lys189 form an enoyl-CoA hydratase/isomerase region. Position 296 (Asp296) interacts with substrate. The interval Glu311 to Ala729 is 3-hydroxyacyl-CoA dehydrogenase. NAD(+) contacts are provided by residues Met324, Asp343, Val400–Glu402, Lys407, and Ser429. His450 acts as the For 3-hydroxyacyl-CoA dehydrogenase activity in catalysis. Residue Asn453 coordinates NAD(+). Residues Asn500 and Tyr660 each coordinate substrate. The tract at residues Arg708–Ala729 is disordered.

In the N-terminal section; belongs to the enoyl-CoA hydratase/isomerase family. The protein in the C-terminal section; belongs to the 3-hydroxyacyl-CoA dehydrogenase family. As to quaternary structure, heterotetramer of two alpha chains (FadB) and two beta chains (FadA).

The enzyme catalyses a (3S)-3-hydroxyacyl-CoA + NAD(+) = a 3-oxoacyl-CoA + NADH + H(+). It carries out the reaction a (3S)-3-hydroxyacyl-CoA = a (2E)-enoyl-CoA + H2O. The catalysed reaction is a 4-saturated-(3S)-3-hydroxyacyl-CoA = a (3E)-enoyl-CoA + H2O. It catalyses the reaction (3S)-3-hydroxybutanoyl-CoA = (3R)-3-hydroxybutanoyl-CoA. The enzyme catalyses a (3Z)-enoyl-CoA = a 4-saturated (2E)-enoyl-CoA. It carries out the reaction a (3E)-enoyl-CoA = a 4-saturated (2E)-enoyl-CoA. The protein operates within lipid metabolism; fatty acid beta-oxidation. Its function is as follows. Involved in the aerobic and anaerobic degradation of long-chain fatty acids via beta-oxidation cycle. Catalyzes the formation of 3-oxoacyl-CoA from enoyl-CoA via L-3-hydroxyacyl-CoA. It can also use D-3-hydroxyacyl-CoA and cis-3-enoyl-CoA as substrate. The protein is Fatty acid oxidation complex subunit alpha of Shigella flexneri serotype 5b (strain 8401).